A 149-amino-acid chain; its full sequence is MEKSLIILKPDAVQRGLIGPILTRLEARGLKFIGIKLSQVSSELAHKHYGVHEGKPFFAGLVSYITSGPVLVVAVEGKDVIEIVRSTVGATNPVKAAPGTIRGDFGVNIGRNLIHASDSPENGDHEVALFFSSEELIRSERSVDQWITE.

Lys-9, Phe-57, Arg-85, Thr-91, Arg-102, and Asn-112 together coordinate ATP. The active-site Pros-phosphohistidine intermediate is the His-115.

This sequence belongs to the NDK family. As to quaternary structure, homotetramer. Mg(2+) is required as a cofactor.

The protein localises to the cytoplasm. It catalyses the reaction a 2'-deoxyribonucleoside 5'-diphosphate + ATP = a 2'-deoxyribonucleoside 5'-triphosphate + ADP. The catalysed reaction is a ribonucleoside 5'-diphosphate + ATP = a ribonucleoside 5'-triphosphate + ADP. In terms of biological role, major role in the synthesis of nucleoside triphosphates other than ATP. The ATP gamma phosphate is transferred to the NDP beta phosphate via a ping-pong mechanism, using a phosphorylated active-site intermediate. The chain is Nucleoside diphosphate kinase from Herpetosiphon aurantiacus (strain ATCC 23779 / DSM 785 / 114-95).